Reading from the N-terminus, the 466-residue chain is MSVRTRFAPSPTGYLHIGGVRTALYSWLHARRQGGHFILRIEDTDVERSTPEATVAILEGMAWLGLDWDEGPFYQMRRMDRYREVLAQMLAAGTAYHCYCSREEVEAMREDQRQRGEKPRYDGRCRERTTVPEGVAPVIRFRSPDDGETVVEDLIHGTVRFQNSEMDDLIIARSDGTPTYNFCVVVDDWDMGITHVIRGDDHLNNTPRQMQILQALGARVPVYAHVPMILGPDKQKLSKRHGAVSVLEYREQGFLPDALLNFLVRLGWSHGDQEIFTREEMVEFFRIDAVNKAASAFNPEKLLWINAQHMQRLTPEGLAQHLLPYLNAVGVTEPLLASGPELPAVVALLQERSKTLVEMAAAAEMFYVAPVAGEPKDVEKHLHGQSALLATMTQALGALPNWEAAAIHSVIQELAVTHADGKMGKVAQPLRVAVAGRAVSPPIDATLALLGKEETLARLRRAAAWI.

The 'HIGH' region motif lies at 9 to 19; it reads PSPTGYLHIGG. C98, C100, C125, and E127 together coordinate Zn(2+). Positions 236 to 240 match the 'KMSKS' region motif; it reads KLSKR. K239 is a binding site for ATP.

It belongs to the class-I aminoacyl-tRNA synthetase family. Glutamate--tRNA ligase type 1 subfamily. Monomer. Requires Zn(2+) as cofactor.

The protein localises to the cytoplasm. It carries out the reaction tRNA(Glu) + L-glutamate + ATP = L-glutamyl-tRNA(Glu) + AMP + diphosphate. Functionally, catalyzes the attachment of glutamate to tRNA(Glu) in a two-step reaction: glutamate is first activated by ATP to form Glu-AMP and then transferred to the acceptor end of tRNA(Glu). This is Glutamate--tRNA ligase 1 from Acidithiobacillus ferrooxidans (strain ATCC 53993 / BNL-5-31) (Leptospirillum ferrooxidans (ATCC 53993)).